The chain runs to 89 residues: Putative defensin-like protein 89 (89 aa).

The N-terminal stretch at 1 to 25 (MGFKNNLSLVSVMVFALILLPMISG) is a signal peptide. Intrachain disulfides connect C30–C66, C36–C57, C42–C64, and C46–C65.

Belongs to the DEFL family.

It localises to the secreted. This chain is Putative defensin-like protein 89, found in Arabidopsis thaliana (Mouse-ear cress).